A 131-amino-acid polypeptide reads, in one-letter code: Small ribosomal subunit protein uS8 (131 aa).

Belongs to the universal ribosomal protein uS8 family. In terms of assembly, part of the 30S ribosomal subunit. Contacts proteins S5 and S12.

Its function is as follows. One of the primary rRNA binding proteins, it binds directly to 16S rRNA central domain where it helps coordinate assembly of the platform of the 30S subunit. This is Small ribosomal subunit protein uS8 from Variovorax paradoxus (strain S110).